Reading from the N-terminus, the 185-residue chain is Elongation factor P (185 aa).

It belongs to the elongation factor P family.

The protein localises to the cytoplasm. The protein operates within protein biosynthesis; polypeptide chain elongation. Involved in peptide bond synthesis. Stimulates efficient translation and peptide-bond synthesis on native or reconstituted 70S ribosomes in vitro. Probably functions indirectly by altering the affinity of the ribosome for aminoacyl-tRNA, thus increasing their reactivity as acceptors for peptidyl transferase. The sequence is that of Elongation factor P from Metamycoplasma arthritidis (strain 158L3-1) (Mycoplasma arthritidis).